The sequence spans 644 residues: G-protein coupled receptor-associated protein LMBRD2 (644 aa).

Residues 1-4 are Extracellular-facing; the sequence is MGTV. A helical membrane pass occupies residues 5-27; that stretch reads SLAVQLFIVFLLTSYLLNKYSTI. Residues 28–31 are Cytoplasmic-facing; it reads RKQN. A helical membrane pass occupies residues 32 to 52; that stretch reads PIVTISTFIGWYFSLIIVFVL. At 53–102 the chain is on the extracellular side; sequence PLDVAITFFHKCENDRQRVLNTTSTPAPIVPECELPGGYVPDDVLFDLWR. N-linked (GlcNAc...) asparagine glycosylation is present at Asn-73. The chain crosses the membrane as a helical span at residues 103–123; the sequence is VVYWSAQILTWLILPLLQSYV. Topologically, residues 124-145 are cytoplasmic; it reads TAGNFTIFGKIRAAVINNTVYY. The chain crosses the membrane as a helical span at residues 146–166; that stretch reads AIYSLCFLAILIYAMFKGVSI. The Extracellular portion of the chain corresponds to 167–172; sequence NIENLK. A helical membrane pass occupies residues 173-193; that stretch reads VILVSASNTWGLFLLVVLLGH. Topologically, residues 194 to 369 are cytoplasmic; it reads GLVELPRSLW…RLQTPFCRVL (176 aa). Residues 216 to 245 adopt a coiled-coil conformation; that stretch reads YFDIEKLASEKSEAEENVKEIYKKVRVLFN. The chain crosses the membrane as a helical span at residues 370-390; it reads GVVTVFMTFFVLFSECTFFVV. At 391–412 the chain is on the extracellular side; that stretch reads SYTVSPAAFVTEYASNRFHYKY. Residues 413-433 traverse the membrane as a helical segment; that stretch reads TQFVAFGIIVYLITCAYFTIF. Residues 434 to 453 lie on the Cytoplasmic side of the membrane; the sequence is RLQIYKYYHLDPNGHTDENS. A helical membrane pass occupies residues 454–474; the sequence is ILFSAILLCRLTPPICLNFLG. Residues 475–502 lie on the Extracellular side of the membrane; that stretch reads MIHMDSHVSMAKSFGVETQFTKLMGHLD. A helical transmembrane segment spans residues 503 to 523; sequence VIPILAKGINIYLPICIILLC. At 524 to 644 the chain is on the cytoplasmic side; that stretch reads AIHYYRVGAY…PSSSGFFDDM (121 aa). Positions 567–576 are enriched in basic and acidic residues; sequence SIKRSNERNQ. Positions 567–644 are disordered; sequence SIKRSNERNQ…PSSSGFFDDM (78 aa). Residues 578-594 are compositionally biased toward low complexity; that stretch reads NQSWTNTITSNTSTTSN. Residues 621-644 are compositionally biased toward polar residues; it reads VSSTTRISLSPTEHPSSSGFFDDM.

Belongs to the LIMR family.

The protein localises to the cell membrane. Functionally, may associate with G-protein coupled receptors and regulate downstream signaling pathways. The sequence is that of G-protein coupled receptor-associated protein LMBRD2 from Caenorhabditis briggsae.